An 816-amino-acid polypeptide reads, in one-letter code: MGDMVVEPATLKPTSEPTPSPSGNNGGSLLSVITEGVGELSVIDPEVAQKACQEVLEKVKLLHGGVAISSKGTPLELVNGDGVDNEIRCLDDPPAQIREEEDEMGAGVASGTAKGARRRRQNNSAKQSWLLRLFESKLFDISMAISYLYNSKEPGVQAYIGNRLFYFRNEDVDFYLPQLLNMYIHMDEDVGDAIKPYIVHRCRQSINFSLQCALLLGAYSSDMHISTQRHSRGTKLRKLILSDELKPAHRKRELPTLSPAPDTGLSPSKRTHQRSKSDATASISLSSNLKRTASNPKVENEDEELSSSTESIDNSFSSPVRLAPEREFIKSLMAIGKRLATLPTKEQKTQRLISELSLLNHKLPARVWLPTAGFDHHVVRVPHTQAVVLNSKDKAPYLIYVEVLECENFDTTSVPARIPENRIRSTRSVENLPECGITHEQRAGSFSTVPNYDNDDEAWSVDDIGELQVELPEVHTNSCDNISQFSVDSITSQESKEPVFIAAGDIRRRLSEQLAHTPTAFKRDPEDPSAVALKEPWQEKVRRIREGSPYGHLPNWRLLSVIVKCGDDLRQELLAFQVLKQLQSIWEQERVPLWIKPYKILVISADSGMIEPVVNAVSIHQVKKQSQLSLLDYFLQEHGSYTTEAFLSAQRNFVQSCAGYCLVCYLLQVKDRHNGNILLDAEGHIIHIDFGFILSSSPRNLGFETSAFKLTTEFVDVMGGLNGDMFNYYKMLMLQGLIAARKHMDKVVQIVEIMQQGSQLPCFHGSSTIRNLKERFHMSMTEEQLQLLVEQMVDGSMRSITTKLYDGFQYLTNGIM.

Disordered stretches follow at residues 1 to 30 (MGDM…GSLL), 101 to 120 (EDEM…RRRR), and 250 to 318 (RKRE…SFSS). Residue G2 is modified to N-acetylglycine. Residues 2–68 (GDMVVEPATL…VKLLHGGVAI (67 aa)) are interaction with ACBD3. Low complexity predominate over residues 10 to 30 (TLKPTSEPTPSPSGNNGGSLL). One can recognise a PIK helical domain in the interval 52–242 (CQEVLEKVKL…GTKLRKLILS (191 aa)). S258 carries the post-translational modification Phosphoserine. T263 carries the post-translational modification Phosphothreonine. 5 positions are modified to phosphoserine: S266, S275, S277, S284, and S294. Polar residues-rich tracts occupy residues 278 to 297 (DATA…SNPK) and 306 to 318 (SSST…SFSS). A Phosphoserine modification is found at S428. T438 is modified (phosphothreonine). A Phosphoserine modification is found at S511. 2 positions are modified to phosphothreonine: T517 and T519. The PI3K/PI4K catalytic domain occupies 535–801 (EPWQEKVRRI…MVDGSMRSIT (267 aa)). The tract at residues 541–547 (VRRIREG) is G-loop. The interval 668-676 (QVKDRHNGN) is catalytic loop. An activation loop region spans residues 687–711 (HIDFGFILSSSPRNLGFETSAFKLT).

It belongs to the PI3/PI4-kinase family. Type III PI4K subfamily. As to quaternary structure, interacts with ARF1 and ARF3 in the Golgi complex, but not with ARF4, ARF5 or ARF6. Interacts with NCS1/FREQ in a calcium-independent manner. Interacts with CALN1/CABP8 and CALN2/CABP7; in a calcium-dependent manner; this interaction competes with NCS1/FREQ binding. Interacts with ACBD3. Interacts with ARMH3, YWHAB, YWHAE, YWHAG, YWHAH, YWHAQ, YWHAZ and SFN. Interacts with GGA2 (via VHS domain); the interaction is important for PI4KB location at the Golgi apparatus membrane. Interacts with ATG9A. Mg(2+) is required as a cofactor. The cofactor is Mn(2+).

It localises to the endomembrane system. Its subcellular location is the mitochondrion outer membrane. The protein resides in the rough endoplasmic reticulum membrane. The protein localises to the golgi apparatus. It is found in the golgi apparatus membrane. It carries out the reaction a 1,2-diacyl-sn-glycero-3-phospho-(1D-myo-inositol) + ATP = a 1,2-diacyl-sn-glycero-3-phospho-(1D-myo-inositol 4-phosphate) + ADP + H(+). Inhibited by wortmannin. Increased kinase activity upon interaction with NCS1/FREQ. Functionally, phosphorylates phosphatidylinositol (PI) in the first committed step in the production of the second messenger inositol-1,4,5,-trisphosphate (PIP). May regulate Golgi disintegration/reorganization during mitosis, possibly via its phosphorylation. Involved in Golgi-to-plasma membrane trafficking. May play an important role in the inner ear development. This Mus musculus (Mouse) protein is Phosphatidylinositol 4-kinase beta (Pi4kb).